Reading from the N-terminus, the 1094-residue chain is Transcriptional regulator CRZ1 (1094 aa).

4 disordered regions span residues 1–29 (MADPASPPSFDAIFAQQPVRRSSSTSTSS), 44–81 (FNSDAPLVDEPQSLSEQARKQQRDPSKDGNNKRYLDMM), 93–428 (GRRQ…FPPS), and 477–519 (RAGA…RTLS). 2 stretches are compositionally biased toward basic and acidic residues: residues 60–78 (QARKQQRDPSKDGNNKRYL) and 94–103 (RRQESLRKES). Position 103 is a phosphoserine (S103). A compositionally biased stretch (low complexity) spans 148 to 159 (PNQPQQPSQQPP). 2 stretches are compositionally biased toward polar residues: residues 166–187 (SEQSVHYASVQQPQYSSFQSSG) and 201–217 (GTTSSMNDSMLSSQISP). Low complexity-rich tracts occupy residues 228-241 (QPPQQQQQQQQQQQ) and 252-262 (EQQQQYAQGEG). A compositionally biased stretch (polar residues) spans 286-324 (VISNTSHPSQYPSRTSSPFPQQSQSNMVPASTVNQTRTE). A phosphoserine mark is found at S288 and S329. Residues 325 to 342 (SFPASRSPSPFAPQQASQ) are compositionally biased toward low complexity. Composition is skewed to polar residues over residues 343–379 (TEASNHVVSTPSMGQPTYPRASSSPRTNPNSPFFNKP) and 396–412 (IVTQSTSNNHSKGLNQP). The segment covering 477 to 493 (RAGAARGAQRQGPQGQG) has biased composition (low complexity). Polar residues predominate over residues 507–519 (PSPQSHPLPRTLS). Phosphoserine occurs at positions 508, 569, 765, and 810. A disordered region spans residues 835–888 (ITGDDGSLLPPSNRGHAMSHSRHSSTSSIRSASPALSISSQGSSFSHHSPRMDM). Low complexity predominate over residues 858–881 (SSTSSIRSASPALSISSQGSSFSH). A C2H2-type 1 zinc finger spans residues 944–968 (FKCPVPGCGSTFTRHFNLKGHLRSH). The C2H2-type 2; degenerate zinc-finger motif lies at 1007–1029 (FECEGCGKKFARLDALTRHHKSE). The disordered stretch occupies residues 1037 to 1094 (THPLPTNFDGSPMSESQYKTYKGIKSTPEGSGRRLSSTASGSGSGKRRSKKSETSEED).

In terms of processing, phosphorylated. Dephosphorylated by calcineurin (CNA1) which promotes nuclear localization.

The protein localises to the cytoplasm. Its subcellular location is the cytosol. It localises to the nucleus. Functionally, DNA-binding transcriptional activator that interacts with calcineurin-dependent response element (CDRE) promoters. Activates expression of genes required to maintain cell wall integrity during stress. Activates expression of genes required for transepithelial migration through the host blood-brain barrier. Required for adaptation to host temperature during infection. This Cryptococcus neoformans var. grubii serotype A (strain H99 / ATCC 208821 / CBS 10515 / FGSC 9487) (Filobasidiella neoformans var. grubii) protein is Transcriptional regulator CRZ1.